The primary structure comprises 108 residues: Urease subunit beta (108 aa).

It belongs to the urease beta subunit family. In terms of assembly, heterotrimer of UreA (gamma), UreB (beta) and UreC (alpha) subunits. Three heterotrimers associate to form the active enzyme.

Its subcellular location is the cytoplasm. The catalysed reaction is urea + 2 H2O + H(+) = hydrogencarbonate + 2 NH4(+). Its pathway is nitrogen metabolism; urea degradation; CO(2) and NH(3) from urea (urease route): step 1/1. The sequence is that of Urease subunit beta from Trichormus variabilis (strain ATCC 29413 / PCC 7937) (Anabaena variabilis).